A 971-amino-acid chain; its full sequence is Translation initiation factor IF-2 (971 aa).

Residues 49 to 63 (HLRKSHGATDGDKRK) are compositionally biased toward basic and acidic residues. Disordered regions lie at residues 49–86 (HLRKSHGATDGDKRKITLTRKHTSEIKQSDATGKARTI) and 101–385 (DVAE…APTE). Residues 105–114 (GAEQGQAQVA) are compositionally biased toward low complexity. Residues 121 to 177 (ELKRREEEARREAELLEKQAQELRERQERLEREEAERRAREEAAEAQRRRAEEEAAA) show a composition bias toward basic and acidic residues. Residues 178–209 (KRAAAAAVEAQQVAAQQAAEAQQETAGAQSAQ) are compositionally biased toward low complexity. Over residues 210–261 (DEARAAAERAAQREAAKKAEDAAREAADKTRAEQEEIRKRREAAEAEARAIR) the composition is skewed to basic and acidic residues. A compositionally biased stretch (pro residues) spans 277 to 286 (PPKPVEPPKP). Positions 298–325 (KPAGASAARPAVKKPAGAAPATTAPAGA) are enriched in low complexity. The segment covering 355–368 (SSGGVDRGWRGGPK) has biased composition (gly residues). Residues 471–640 (PRPPVVTVMG…LLQAEVLELK (170 aa)) enclose the tr-type G domain. The interval 480 to 487 (GHVDHGKT) is G1. Position 480 to 487 (480 to 487 (GHVDHGKT)) interacts with GTP. The segment at 505 to 509 (GITQH) is G2. The segment at 526 to 529 (DTPG) is G3. GTP is bound by residues 526–530 (DTPGH) and 580–583 (NKID). The tract at residues 580–583 (NKID) is G4. The interval 616-618 (SAK) is G5.

Belongs to the TRAFAC class translation factor GTPase superfamily. Classic translation factor GTPase family. IF-2 subfamily.

The protein localises to the cytoplasm. One of the essential components for the initiation of protein synthesis. Protects formylmethionyl-tRNA from spontaneous hydrolysis and promotes its binding to the 30S ribosomal subunits. Also involved in the hydrolysis of GTP during the formation of the 70S ribosomal complex. This Burkholderia ambifaria (strain ATCC BAA-244 / DSM 16087 / CCUG 44356 / LMG 19182 / AMMD) (Burkholderia cepacia (strain AMMD)) protein is Translation initiation factor IF-2.